Consider the following 164-residue polypeptide: Vesiculogenesis and immune response regulator (164 aa).

Could be O-mannosylated. Is likely mannosylated on Thr-61 when overexpressed in M.smegmatis.

It localises to the cell inner membrane. The protein localises to the cytoplasm. Its function is as follows. Virulence factor that regulates vesiculogenesis. Acts by regulating the production of mycobacterial membrane vesicles (MV) bearing Toll-like receptor 2 (TLR2) ligands, including the lipoproteins LpqH, a major host TLR2 agonist, and SodC. By restraining the release of most of the material that activates host cells through TLR2, VirR reduces the immunostimulant potential of M.tuberculosis and increases its virulence. May contribute to cell envelope integrity. In terms of biological role, when overexpressed in M.smegmatis, it modulates the production of IL-10, IL-12 p40 and TNF-alpha by RAW264.7 macrophages and it decreases the killing of M.smegmatis. The polypeptide is Vesiculogenesis and immune response regulator (Mycobacterium tuberculosis (strain ATCC 25618 / H37Rv)).